Consider the following 3354-residue polypeptide: Cadherin-23 (3354 aa).

An N-terminal signal peptide occupies residues Met1–Gly23. Over Gln24–Ala3064 the chain is Extracellular. 27 Cadherin domains span residues His34–Phe132, His133–Phe236, Ile237–Phe348, Asn349–Phe460, Ser461–Phe561, Gln562–Phe671, Ser672–Tyr784, Lys779–Phe890, Arg891–Phe995, Phe996–Phe1102, Leu1103–Phe1208, Gln1210–Phe1313, Ser1314–Phe1418, Phe1420–Ile1527, Ser1529–Phe1634, Gln1635–Phe1744, Pro1745–Leu1851, Leu1852–Phe1959, Thr1960–Phe2069, Ser2070–Phe2174, Leu2175–Phe2293, Gly2297–Phe2402, Asp2403–Phe2509, Ser2510–Phe2611, Pro2614–Phe2722, Ser2729–Phe2846, and Thr2847–Phe2975. Residues Asn155 and Asn206 are each glycosylated (N-linked (GlcNAc...) asparagine). 32 N-linked (GlcNAc...) asparagine glycosylation sites follow: Asn349, Asn393, Asn434, Asn466, Asn472, Asn602, Asn694, Asn765, Asn810, Asn827, Asn941, Asn1001, Asn1018, Asn1171, Asn1282, Asn1315, Asn1473, Asn1534, Asn1651, Asn1667, Asn1818, Asn1857, Asn1889, Asn1902, Asn2014, Asn2050, Asn2129, Asn2168, Asn2195, Asn2263, Asn2357, and Asn2369. N-linked (GlcNAc...) asparagine glycans are attached at residues Asn2578, Asn2616, Asn2749, Asn2808, Asn2877, Asn2896, Asn2941, and Asn2981. A helical transmembrane segment spans residues Leu3065–Leu3085. The Cytoplasmic segment spans residues Met3086–Leu3354.

In terms of assembly, interacts with USH1C and USH1G. antiparallel heterodimer with PCDH15. Isoform C1: Interacts with CAMSAP3; leading to inhibit CAMSAP3 ability to induce microtubule bundle formation. As to expression, in adult animals relatively high levels of expression are found in testis, skeletal muscle, heart, eye and thymus, and lower expression in kidney, lung and brain. Found in the sensory hair cells of the inner ear.

It localises to the cell membrane. Functionally, cadherins are calcium-dependent cell adhesion proteins. They preferentially interact with themselves in a homophilic manner in connecting cells. CDH23 is required for establishing and/or maintaining the proper organization of the stereocilia bundle of hair cells in the cochlea and the vestibule during late embryonic/early postnatal development. It is part of the functional network formed by USH1C, USH1G, CDH23 and MYO7A that mediates mechanotransduction in cochlear hair cells. Required for normal hearing. In Mus musculus (Mouse), this protein is Cadherin-23 (Cdh23).